Here is a 190-residue protein sequence, read N- to C-terminus: Peptidyl-tRNA hydrolase (190 aa).

Tyr18 provides a ligand contact to tRNA. His23 (proton acceptor) is an active-site residue. TRNA is bound by residues Phe67, Asn69, and Asn115.

It belongs to the PTH family. In terms of assembly, monomer.

It is found in the cytoplasm. The enzyme catalyses an N-acyl-L-alpha-aminoacyl-tRNA + H2O = an N-acyl-L-amino acid + a tRNA + H(+). Hydrolyzes ribosome-free peptidyl-tRNAs (with 1 or more amino acids incorporated), which drop off the ribosome during protein synthesis, or as a result of ribosome stalling. Functionally, catalyzes the release of premature peptidyl moieties from peptidyl-tRNA molecules trapped in stalled 50S ribosomal subunits, and thus maintains levels of free tRNAs and 50S ribosomes. The protein is Peptidyl-tRNA hydrolase of Leptospira interrogans serogroup Icterohaemorrhagiae serovar Lai (strain 56601).